Here is a 534-residue protein sequence, read N- to C-terminus: GPI transamidase component GPI17 (534 aa).

The Cytoplasmic portion of the chain corresponds to 1-8; the sequence is MSNANLRK. The helical transmembrane segment at 9-29 threads the bilayer; that stretch reads WVGFCFVAIYLFLGVPLWYKL. Over 30 to 472 the chain is Lumenal; sequence TTVYRASLPI…VQQNFFPQEH (443 aa). Asn-100, Asn-170, Asn-228, Asn-247, and Asn-299 each carry an N-linked (GlcNAc...) asparagine glycan. The chain crosses the membrane as a helical span at residues 473–493; the sequence is MIAVYLPLLGPISAVMFFGFY. The Cytoplasmic portion of the chain corresponds to 494-534; the sequence is NVMKEKNQKSKKNGTEREVAKEKLELKEAQKLHAIDGEDEL.

The protein belongs to the PIGS family. Forms a complex with CDC91, GPI16, GPI8 and GAA1. Post-translationally, N-glycosylated.

The protein localises to the endoplasmic reticulum membrane. Its pathway is glycolipid biosynthesis; glycosylphosphatidylinositol-anchor biosynthesis. In terms of biological role, component of the GPI transamidase complex. Involved in transfer of GPI to proteins. The polypeptide is GPI transamidase component GPI17 (GPI17) (Saccharomyces cerevisiae (strain ATCC 204508 / S288c) (Baker's yeast)).